A 43-amino-acid chain; its full sequence is Photosystem II reaction center protein Psb30 (43 aa).

The helical transmembrane segment at 15-35 (VIFQLTFVSLILISGPVVIFL) threads the bilayer.

The protein belongs to the Psb30/Ycf12 family. PSII is composed of 1 copy each of membrane proteins PsbA, PsbB, PsbC, PsbD, PsbE, PsbF, PsbH, PsbI, PsbJ, PsbK, PsbL, PsbM, PsbT, PsbX, PsbY, PsbZ, Psb30/Ycf12, peripheral proteins PsbO, CyanoQ (PsbQ), PsbU, PsbV and a large number of cofactors. It forms dimeric complexes.

The protein localises to the cellular thylakoid membrane. In terms of biological role, a core subunit of photosystem II (PSII), probably helps stabilize the reaction center. The sequence is that of Photosystem II reaction center protein Psb30 from Picosynechococcus sp. (strain ATCC 27264 / PCC 7002 / PR-6) (Agmenellum quadruplicatum).